The sequence spans 50 residues: Insulin (50 aa).

Disulfide bonds link C7-C36, C19-C49, and C35-C40.

It belongs to the insulin family. In terms of assembly, heterodimer of a B chain and an A chain linked by two disulfide bonds.

The protein localises to the secreted. Insulin decreases blood glucose concentration. It increases cell permeability to monosaccharides, amino acids and fatty acids. It accelerates glycolysis, the pentose phosphate cycle, and glycogen synthesis in liver. This Oncorhynchus gorbuscha (Pink salmon) protein is Insulin (ins).